Reading from the N-terminus, the 134-residue chain is Small ribosomal subunit protein uS9 (134 aa).

The tract at residues 114–134 (QKESKNFGGPGARAKYQKSYR) is disordered.

Belongs to the universal ribosomal protein uS9 family.

This Methanosarcina acetivorans (strain ATCC 35395 / DSM 2834 / JCM 12185 / C2A) protein is Small ribosomal subunit protein uS9.